Here is a 384-residue protein sequence, read N- to C-terminus: Chaperone protein DnaJ (384 aa).

One can recognise a J domain in the interval 4–68 (DFYDVLGVSR…EKRQMYDQLG (65 aa)). 2 disordered regions span residues 74 to 105 (QAQKRGAGGGGGGRGQGNPFGGGGNPFGGMGG) and 113 to 132 (NNLFNGGGGQRRSRPQQGRD). The segment covering 79 to 105 (GAGGGGGGRGQGNPFGGGGNPFGGMGG) has biased composition (gly residues). Residues 147–229 (GVERDVTIRR…CRGSGRVRRT (83 aa)) form a CR-type zinc finger. Zn(2+) contacts are provided by Cys160, Cys163, Cys177, Cys180, Cys203, Cys206, Cys217, and Cys220. CXXCXGXG motif repeat units lie at residues 160-167 (CPECDGEG), 177-184 (CSECNGSG), 203-210 (CRACGGEG), and 217-224 (CSECRGSG).

The protein belongs to the DnaJ family. Homodimer. It depends on Zn(2+) as a cofactor.

The protein resides in the cytoplasm. In terms of biological role, participates actively in the response to hyperosmotic and heat shock by preventing the aggregation of stress-denatured proteins and by disaggregating proteins, also in an autonomous, DnaK-independent fashion. Unfolded proteins bind initially to DnaJ; upon interaction with the DnaJ-bound protein, DnaK hydrolyzes its bound ATP, resulting in the formation of a stable complex. GrpE releases ADP from DnaK; ATP binding to DnaK triggers the release of the substrate protein, thus completing the reaction cycle. Several rounds of ATP-dependent interactions between DnaJ, DnaK and GrpE are required for fully efficient folding. Also involved, together with DnaK and GrpE, in the DNA replication of plasmids through activation of initiation proteins. This is Chaperone protein DnaJ from Haloferax mediterranei (strain ATCC 33500 / DSM 1411 / JCM 8866 / NBRC 14739 / NCIMB 2177 / R-4) (Halobacterium mediterranei).